The following is a 163-amino-acid chain: Halocyanin (163 aa).

Positions 1–24 are cleaved as a signal peptide; it reads MKDISRRRFVLGTGATVAAATLAG. An N-acetylcysteine modification is found at C25. C25 is lipidated: S-archaeol cysteine. The span at 26-38 shows a compositional bias: gly residues; that stretch reads NGNGNGNGNGNGN. Positions 26–48 are disordered; it reads NGNGNGNGNGNGNGEPDTPEGRA. Residues 48-163 enclose the Plastocyanin-like domain; the sequence is ADQFLTDNDA…QGMYGAVIVE (116 aa). The Cu cation site is built by H110, C148, H151, and M156.

It localises to the cell membrane. Functionally, electron donor. Binds one copper ion. The protein is Halocyanin (hcy) of Natronomonas pharaonis (Natronobacterium pharaonis).